A 305-amino-acid polypeptide reads, in one-letter code: GMP synthase [glutamine-hydrolyzing] subunit B (305 aa).

One can recognise a GMPS ATP-PPase domain in the interval valine 2–arginine 185. Position 29 to 35 (serine 29 to serine 35) interacts with ATP.

In terms of assembly, heterodimer composed of a glutamine amidotransferase subunit (A) and a GMP-binding subunit (B).

The enzyme catalyses XMP + L-glutamine + ATP + H2O = GMP + L-glutamate + AMP + diphosphate + 2 H(+). It participates in purine metabolism; GMP biosynthesis; GMP from XMP (L-Gln route): step 1/1. Functionally, catalyzes the synthesis of GMP from XMP. This Halobacterium salinarum (strain ATCC 29341 / DSM 671 / R1) protein is GMP synthase [glutamine-hydrolyzing] subunit B.